A 232-amino-acid polypeptide reads, in one-letter code: Purine nucleoside phosphorylase DeoD-type (232 aa).

His-4 serves as a coordination point for a purine D-ribonucleoside. Residues Gly-20, Arg-24, Arg-43, and 87–90 (RVGS) contribute to the phosphate site. A purine D-ribonucleoside-binding positions include Glu-162, 178-180 (EME), and 202-203 (SD). The active-site Proton donor is Asp-203.

Belongs to the PNP/UDP phosphorylase family. As to quaternary structure, homohexamer; trimer of homodimers.

The enzyme catalyses a purine D-ribonucleoside + phosphate = a purine nucleobase + alpha-D-ribose 1-phosphate. It carries out the reaction a purine 2'-deoxy-D-ribonucleoside + phosphate = a purine nucleobase + 2-deoxy-alpha-D-ribose 1-phosphate. In terms of biological role, catalyzes the reversible phosphorolytic breakdown of the N-glycosidic bond in the beta-(deoxy)ribonucleoside molecules, with the formation of the corresponding free purine bases and pentose-1-phosphate. This Bacillus velezensis (strain DSM 23117 / BGSC 10A6 / LMG 26770 / FZB42) (Bacillus amyloliquefaciens subsp. plantarum) protein is Purine nucleoside phosphorylase DeoD-type.